The following is a 356-amino-acid chain: MSPCGRARRQTSRGAMAVLAWKFPRTRLPMGASALCVVVLCWLYIFPVYRLPNEKEIVQGVLQQGTAWRRNQTAARAFRKQMEDCCDPAHLFAMTKMNSPMGKSMWYDGEFLYSFTIDNSTYSLFPQATPFQLPLKKCAVVGNGGILKKSGCGRQIDEANFVMRCNLPPLSSEYTKDVGSKSQLVTANPSIIRQRFQNLLWSRKTFVDNMKIYNHSYIYMPAFSMKTGTEPSLRVYYTLSDVGANQTVLFANPNFLRSIGKFWKSRGIHAKRLSTGLFLVSAALGLCEEVAIYGFWPFSVNMHEQPISHHYYDNVLPFSGFHAMPEEFLQLWYLHKIGALRMQLERCEDTSLQPTS.

Topologically, residues 1–29 (MSPCGRARRQTSRGAMAVLAWKFPRTRLP) are cytoplasmic. The helical; Signal-anchor for type II membrane protein transmembrane segment at 30-48 (MGASALCVVVLCWLYIFPV) threads the bilayer. Over 49–356 (YRLPNEKEIV…CEDTSLQPTS (308 aa)) the chain is Lumenal. Asn71 and Asn119 each carry an N-linked (GlcNAc...) asparagine glycan. 2 disulfide bridges follow: Cys138–Cys287 and Cys152–Cys347. CMP-N-acetyl-beta-neuraminate-binding residues include Asn143 and Asn166. 2 N-linked (GlcNAc...) asparagine glycosylation sites follow: Asn214 and Asn245. Residues Ser274, Thr275, Gly276, Trp296, and His310 each coordinate CMP-N-acetyl-beta-neuraminate. The Proton donor/acceptor role is filled by His322.

The protein belongs to the glycosyltransferase 29 family.

The protein resides in the golgi apparatus membrane. The catalysed reaction is an N-acetyl-alpha-neuraminyl-(2-&gt;3)-beta-D-galactosyl derivative + CMP-N-acetyl-beta-neuraminate = an N-acetyl-alpha-neuraminyl-(2-&gt;8)-N-acetyl-alpha-neuraminyl-(2-&gt;3)-beta-D-galactosyl derivative + CMP + H(+). It catalyses the reaction a ganglioside GM3 (d18:1(4E)) + CMP-N-acetyl-beta-neuraminate = a ganglioside GD3 (d18:1(4E)) + CMP + H(+). It carries out the reaction a ganglioside GD3 (d18:1(4E)) + CMP-N-acetyl-beta-neuraminate = a ganglioside GT3 (d18:1(4E)) + CMP + H(+). The enzyme catalyses a ganglioside GD1a (d18:1(4E)) + CMP-N-acetyl-beta-neuraminate = a ganglioside GT1a (d18:1(4E)) + CMP + H(+). The catalysed reaction is a ganglioside GT1b (d18:1(4E)) + CMP-N-acetyl-beta-neuraminate = a ganglioside GQ1b (d18:1(4E)) + CMP + H(+). It catalyses the reaction a ganglioside GM1b (d18:1(4E)) + CMP-N-acetyl-beta-neuraminate = a ganglioside GD1c (d18:1(4E)) + CMP + H(+). It carries out the reaction a ganglioside GD3 + CMP-N-acetyl-beta-neuraminate = a ganglioside GT3 + CMP + H(+). The enzyme catalyses [alpha-N-acetylneuraminyl-(2-&gt;8)](n)-alpha-N-acetylneuraminyl-(2-&gt;8)-alpha-N-acetylneuraminyl-(2-&gt;3)-beta-D-galactosyl-(1-&gt;4)-beta-D-glucosyl-(1&lt;-&gt;1)-ceramide + CMP-N-acetyl-beta-neuraminate = [alpha-N-acetylneuraminyl-(2-&gt;8)](n+1)-alpha-N-acetylneuraminyl-(2-&gt;8)-alpha-N-acetylneuraminyl-(2-&gt;3)-beta-D-galactosyl-(1-&gt;4)-beta-D-glucosyl-(1&lt;-&gt;1)-ceramide + CMP + H(+). It participates in protein modification; protein glycosylation. It functions in the pathway lipid metabolism; sphingolipid metabolism. In terms of biological role, catalyzes the addition of sialic acid in alpha 2,8-linkage to the sialic acid moiety of the ganglioside GM3 to form ganglioside GD3; gangliosides are a subfamily of complex glycosphingolipds that contain one or more residues of sialic acid. Can catalyze the addition of a second alpha-2,8- sialic acid to GD3 to form GT3. Can use GM1b, GD1a and GT1b as acceptor substrates to synthesize GD1c, GT1a and GQ1b respectively. The polypeptide is Alpha-N-acetylneuraminide alpha-2,8-sialyltransferase (Pan troglodytes (Chimpanzee)).